Consider the following 310-residue polypeptide: Isoflavone reductase homolog P3 (310 aa).

NADP(+) contacts are provided by residues 12-18 (GGTGYIG), R37, and K46. K134 acts as the Proton acceptor in catalysis. NADP(+) is bound at residue R138.

It belongs to the NmrA-type oxidoreductase family. Isoflavone reductase subfamily.

It localises to the cytoplasm. The polypeptide is Isoflavone reductase homolog P3 (Arabidopsis thaliana (Mouse-ear cress)).